The primary structure comprises 184 residues: MILSDRDLKYYLEKSWIKIQPLREDTIRENGVDLRVGNEIARFKKTDKIFDPDNPDPSFFQTEKGEEFIIQPYEHVLLTTEEYIELNNDVMAFVNLRSTFARLGLFIPPTIVDAGFKGQVTIEVVGSSFPVKLKRSTRFIHLIFARTLTPVEYPYQGKYQGQKGVTLPKFNSQISSFYYQHQSI.

DCTP contacts are provided by residues 97–102 and Asp113; that span reads RSTFAR. Glu123 functions as the Proton donor/acceptor in the catalytic mechanism. DCTP-binding residues include Tyr155 and Gln162.

Belongs to the dCTP deaminase family. As to quaternary structure, homotrimer.

It carries out the reaction dCTP + H2O + H(+) = dUTP + NH4(+). The protein operates within pyrimidine metabolism; dUMP biosynthesis; dUMP from dCTP (dUTP route): step 1/2. Catalyzes the deamination of dCTP to dUTP. This is dCTP deaminase from Saccharolobus solfataricus (strain ATCC 35092 / DSM 1617 / JCM 11322 / P2) (Sulfolobus solfataricus).